A 363-amino-acid polypeptide reads, in one-letter code: Cyclin-D1-1 (363 aa).

The disordered stretch occupies residues 39–77; the sequence is ELEREGEPAQGSSPSSSLSCAAAAAAAADDDDEDEDEHG. Over residues 50 to 65 the composition is skewed to low complexity; sequence SSPSSSLSCAAAAAAA. Over residues 66-75 the composition is skewed to acidic residues; that stretch reads ADDDDEDEDE.

This sequence belongs to the cyclin family. Cyclin D subfamily.

This is Cyclin-D1-1 (CYCD1-1) from Oryza sativa subsp. japonica (Rice).